A 228-amino-acid polypeptide reads, in one-letter code: 7-cyano-7-deazaguanine synthase (228 aa).

Position 8-18 (8-18 (LSGGLDSTTCL)) interacts with ATP. Residues cysteine 188, cysteine 198, cysteine 201, and cysteine 204 each coordinate Zn(2+).

This sequence belongs to the QueC family. Zn(2+) serves as cofactor.

The catalysed reaction is 7-carboxy-7-deazaguanine + NH4(+) + ATP = 7-cyano-7-deazaguanine + ADP + phosphate + H2O + H(+). It participates in purine metabolism; 7-cyano-7-deazaguanine biosynthesis. In terms of biological role, catalyzes the ATP-dependent conversion of 7-carboxy-7-deazaguanine (CDG) to 7-cyano-7-deazaguanine (preQ(0)). This Legionella pneumophila (strain Corby) protein is 7-cyano-7-deazaguanine synthase.